Here is a 500-residue protein sequence, read N- to C-terminus: NAD(P)H-quinone oxidoreductase chain 4, chloroplastic (500 aa).

A run of 14 helical transmembrane segments spans residues 3–23 (FFPW…LIFF), 37–57 (ICIC…HFQL), 87–107 (IGPI…AWPI), 113–130 (LFHF…GSFS), 134–154 (LLLF…LLSM), 167–187 (FILY…GMGL), 208–228 (ALEI…SPII), 242–262 (HYST…YGLV), 272–292 (AHSI…IYAA), 305–325 (IAYS…SITD), 330–350 (GAVL…FLAG), 386–406 (LALP…GIIT), 416–436 (ILIT…SLSM), and 462–482 (LFVS…PDFV).

The protein belongs to the complex I subunit 4 family.

The protein resides in the plastid. It is found in the chloroplast thylakoid membrane. The catalysed reaction is a plastoquinone + NADH + (n+1) H(+)(in) = a plastoquinol + NAD(+) + n H(+)(out). It carries out the reaction a plastoquinone + NADPH + (n+1) H(+)(in) = a plastoquinol + NADP(+) + n H(+)(out). The sequence is that of NAD(P)H-quinone oxidoreductase chain 4, chloroplastic from Platanus occidentalis (Sycamore).